Reading from the N-terminus, the 374-residue chain is Chaperone protein DnaJ (374 aa).

Positions 5-70 (DYYEVLGVER…NKRAAYDQYG (66 aa)) constitute a J domain. The segment at 133-211 (GTSVNIRVPT…CHGEGRVEEY (79 aa)) adopts a CR-type zinc-finger fold. The Zn(2+) site is built by C146, C149, C163, C166, C185, C188, C199, and C202. CXXCXGXG motif repeat units follow at residues 146 to 153 (CKPCDGSG), 163 to 170 (CPTCGGIG), 185 to 192 (CPRCHGQG), and 199 to 206 (CDSCHGEG).

Belongs to the DnaJ family. In terms of assembly, homodimer. It depends on Zn(2+) as a cofactor.

It is found in the cytoplasm. Functionally, participates actively in the response to hyperosmotic and heat shock by preventing the aggregation of stress-denatured proteins and by disaggregating proteins, also in an autonomous, DnaK-independent fashion. Unfolded proteins bind initially to DnaJ; upon interaction with the DnaJ-bound protein, DnaK hydrolyzes its bound ATP, resulting in the formation of a stable complex. GrpE releases ADP from DnaK; ATP binding to DnaK triggers the release of the substrate protein, thus completing the reaction cycle. Several rounds of ATP-dependent interactions between DnaJ, DnaK and GrpE are required for fully efficient folding. Also involved, together with DnaK and GrpE, in the DNA replication of plasmids through activation of initiation proteins. The polypeptide is Chaperone protein DnaJ (Pseudomonas fluorescens (strain SBW25)).